Here is an 86-residue protein sequence, read N- to C-terminus: UPF0367 protein NATL1_01981 (86 aa).

This sequence belongs to the UPF0367 family.

In Prochlorococcus marinus (strain NATL1A), this protein is UPF0367 protein NATL1_01981.